A 222-amino-acid chain; its full sequence is Ribose-5-phosphate isomerase A (222 aa).

Substrate contacts are provided by residues 28–31 (TGST), 81–84 (DGAD), and 94–97 (KGGG). The active-site Proton acceptor is the Glu-103. Lys-121 is a substrate binding site.

Belongs to the ribose 5-phosphate isomerase family. As to quaternary structure, homodimer.

The catalysed reaction is aldehydo-D-ribose 5-phosphate = D-ribulose 5-phosphate. The protein operates within carbohydrate degradation; pentose phosphate pathway; D-ribose 5-phosphate from D-ribulose 5-phosphate (non-oxidative stage): step 1/1. In terms of biological role, catalyzes the reversible conversion of ribose-5-phosphate to ribulose 5-phosphate. This Azoarcus sp. (strain BH72) protein is Ribose-5-phosphate isomerase A.